The following is a 409-amino-acid chain: Arginine deiminase (409 aa).

Residue Cys399 is the Amidino-cysteine intermediate of the active site.

It belongs to the arginine deiminase family.

The protein resides in the cytoplasm. The enzyme catalyses L-arginine + H2O = L-citrulline + NH4(+). It participates in amino-acid degradation; L-arginine degradation via ADI pathway; carbamoyl phosphate from L-arginine: step 1/2. This chain is Arginine deiminase, found in Streptococcus sanguinis (strain SK36).